Here is a 460-residue protein sequence, read N- to C-terminus: Bifunctional protein GlmU (460 aa).

The segment at 1-237 is pyrophosphorylase; that stretch reads MSSNQYTAGA…DPDLLGVNTP (237 aa). Residues 13-16, Lys-27, Gln-78, and 83-84 each bind UDP-N-acetyl-alpha-D-glucosamine; these read LAAG and GT. Residue Asp-109 coordinates Mg(2+). Residues Gly-146, Glu-160, Asn-177, and Asn-235 each contribute to the UDP-N-acetyl-alpha-D-glucosamine site. Asn-235 serves as a coordination point for Mg(2+). Residues 238 to 258 form a linker region; the sequence is AELMRSEELLRENIVTRHLHN. The interval 259-460 is N-acetyltransferase; sequence GVHVHAAGSV…QKNLRKTRHS (202 aa). Residues Arg-341 and Lys-359 each contribute to the UDP-N-acetyl-alpha-D-glucosamine site. His-371 functions as the Proton acceptor in the catalytic mechanism. UDP-N-acetyl-alpha-D-glucosamine contacts are provided by Tyr-374 and Asn-385. Residues Ala-388, 394-395, Ser-413, Ala-431, and Arg-448 each bind acetyl-CoA; that span reads NY.

It in the N-terminal section; belongs to the N-acetylglucosamine-1-phosphate uridyltransferase family. The protein in the C-terminal section; belongs to the transferase hexapeptide repeat family. In terms of assembly, homotrimer. Requires Mg(2+) as cofactor.

It localises to the cytoplasm. It carries out the reaction alpha-D-glucosamine 1-phosphate + acetyl-CoA = N-acetyl-alpha-D-glucosamine 1-phosphate + CoA + H(+). The enzyme catalyses N-acetyl-alpha-D-glucosamine 1-phosphate + UTP + H(+) = UDP-N-acetyl-alpha-D-glucosamine + diphosphate. It functions in the pathway nucleotide-sugar biosynthesis; UDP-N-acetyl-alpha-D-glucosamine biosynthesis; N-acetyl-alpha-D-glucosamine 1-phosphate from alpha-D-glucosamine 6-phosphate (route II): step 2/2. Its pathway is nucleotide-sugar biosynthesis; UDP-N-acetyl-alpha-D-glucosamine biosynthesis; UDP-N-acetyl-alpha-D-glucosamine from N-acetyl-alpha-D-glucosamine 1-phosphate: step 1/1. It participates in bacterial outer membrane biogenesis; LPS lipid A biosynthesis. Its function is as follows. Catalyzes the last two sequential reactions in the de novo biosynthetic pathway for UDP-N-acetylglucosamine (UDP-GlcNAc). The C-terminal domain catalyzes the transfer of acetyl group from acetyl coenzyme A to glucosamine-1-phosphate (GlcN-1-P) to produce N-acetylglucosamine-1-phosphate (GlcNAc-1-P), which is converted into UDP-GlcNAc by the transfer of uridine 5-monophosphate (from uridine 5-triphosphate), a reaction catalyzed by the N-terminal domain. The protein is Bifunctional protein GlmU of Oleidesulfovibrio alaskensis (strain ATCC BAA-1058 / DSM 17464 / G20) (Desulfovibrio alaskensis).